The sequence spans 423 residues: uncharacterized protein (423 aa).

The segment at 383 to 423 is disordered; it reads ARGTTGGGGTRSGTSTDGQEDGRKPPVVVIREQPPPGNPPR.

Belongs to the mycobacterial PPE family.

This is an uncharacterized protein from Mycobacterium tuberculosis (strain CDC 1551 / Oshkosh).